Reading from the N-terminus, the 378-residue chain is WUSCHEL-related homeobox 9 (378 aa).

Disordered stretches follow at residues 1–60 and 123–173; these read MASS…NPKP and KHSL…GSQM. Over residues 32 to 42 the composition is skewed to low complexity; it reads SASHRSSPFSS. A compositionally biased stretch (basic and acidic residues) spans 45–54; sequence EVERSPEPKP. Residues 51–115 constitute a DNA-binding region (homeobox; WUS-type); that stretch reads EPKPRWNPKP…NRKSRSKHKL (65 aa). Composition is skewed to low complexity over residues 137–152 and 161–171; these read PSAS…SSKS and KNNTNLSLGGS.

Belongs to the WUS homeobox family. As to expression, expressed in the basal cell and later at the boundary between suspensor and proembryo. Expressed at low levels in proliferating tissues post embryonically. Detected in vegetative shoot apical meristem, leaf primordia, floral meristems, emerging floral organs, epidermal layer of the placenta and in the upper portion of the root meristematic zone.

It is found in the nucleus. It localises to the cytoplasm. Homeodomain transcription factor required for meristem growth and early development. Promotes cell proliferation and prevents premature differentiation in meristematic tissues during postembryonic development. Essential for maintaining tissue growth during embryogenesis. May act by repressing TSS to promote meristematic proliferation. Involved in the transcriptional activation of a subset of cytokinin response factors. May act as a negative regulator of cytokinin signaling in the dark. The sequence is that of WUSCHEL-related homeobox 9 from Arabidopsis thaliana (Mouse-ear cress).